Consider the following 296-residue polypeptide: 4-hydroxybenzoate octaprenyltransferase (296 aa).

8 consecutive transmembrane segments (helical) span residues 23-43, 46-66, 99-119, 141-161, 163-183, 211-231, 237-257, and 265-285; these read IGILLLLWPTLWGIWLASPGW, GLVLFVFIAGTVLMRSAGCVM, LALALSLVAFILVLQLNPLVV, IPQAYLGIAFGFGIPMAFAAI, GQLPLEAWILLLANVFWAIAY, DVFAVMACYGAFLILMAWVGV, WPYFAGLGVAALVALYHYALI, and CFKAFLHNNWLGAAIFVGVLA.

This sequence belongs to the UbiA prenyltransferase family. Mg(2+) serves as cofactor.

Its subcellular location is the cell inner membrane. The catalysed reaction is all-trans-octaprenyl diphosphate + 4-hydroxybenzoate = 4-hydroxy-3-(all-trans-octaprenyl)benzoate + diphosphate. It participates in cofactor biosynthesis; ubiquinone biosynthesis. Catalyzes the prenylation of para-hydroxybenzoate (PHB) with an all-trans polyprenyl group. Mediates the second step in the final reaction sequence of ubiquinone-8 (UQ-8) biosynthesis, which is the condensation of the polyisoprenoid side chain with PHB, generating the first membrane-bound Q intermediate 3-octaprenyl-4-hydroxybenzoate. This chain is 4-hydroxybenzoate octaprenyltransferase, found in Methylobacillus flagellatus (strain ATCC 51484 / DSM 6875 / VKM B-1610 / KT).